The sequence spans 490 residues: Probable diaminopimelate decarboxylase, chloroplastic (490 aa).

The N-terminal 44 residues, 1–44, are a transit peptide targeting the chloroplast; the sequence is MAAANLLSRALLPALNPNPSSHSNRVSPSAVSLRCRHGLTASVR. Residues 45-66 form a disordered region; it reads ASLSTAAPSPPPRPAAAAADGR. An N6-(pyridoxal phosphate)lysine modification is found at lysine 130. Pyridoxal 5'-phosphate contacts are provided by residues glycine 309 and 345–348; that span reads EPGR. Substrate is bound by residues arginine 348, arginine 384, and tyrosine 388. Cysteine 415 acts as the Proton donor in catalysis. Substrate-binding residues include glutamate 416 and tyrosine 444. Tyrosine 444 serves as a coordination point for pyridoxal 5'-phosphate.

It belongs to the Orn/Lys/Arg decarboxylase class-II family. LysA subfamily. In terms of assembly, homodimer. Pyridoxal 5'-phosphate serves as cofactor.

The protein localises to the plastid. It localises to the chloroplast. The enzyme catalyses meso-2,6-diaminopimelate + H(+) = L-lysine + CO2. It functions in the pathway amino-acid biosynthesis; L-lysine biosynthesis via DAP pathway; L-lysine from DL-2,6-diaminopimelate: step 1/1. In terms of biological role, specifically catalyzes the decarboxylation of meso-diaminopimelate (meso-DAP) to L-lysine. The sequence is that of Probable diaminopimelate decarboxylase, chloroplastic (LYSA) from Oryza sativa subsp. japonica (Rice).